The following is a 246-amino-acid chain: MAGHSKWANIKHRKAAQDAQRGKIFTKLIRELVTAAKLGGGDVGANPRLRAAVDKALSNNMTRDTINRAIERGVGGGDGTNMETRIYEGYGPGGTAVMVECLSDNANRTISQVRPSFTKCGGNLGTEGSVGYLFSKKGLILVESADEDALTEAAIEAGADDIQVQEDGSVEIYTAWEDLGLVKDGIEVAGFKVVNAEVTMIPSTMVDLDAETAPKLLRLIDMLEDCDDVQNVYHNGEISDEVAALL.

This sequence belongs to the TACO1 family.

It localises to the cytoplasm. The sequence is that of Probable transcriptional regulatory protein HSM_1763 from Histophilus somni (strain 2336) (Haemophilus somnus).